The chain runs to 489 residues: Rhamnulokinase (489 aa).

13–17 contacts ATP; that stretch reads ASSGR. C68 and C222 are joined by a disulfide. Residues G83 and 236 to 238 contribute to the substrate site; that span reads HDT. D237 functions as the Proton acceptor in the catalytic mechanism. Residue T259 coordinates ATP. N296 serves as a coordination point for substrate. Q304 serves as a coordination point for ATP. Cysteines 353 and 370 form a disulfide. G402 serves as a coordination point for ATP. Residues C413 and C417 are joined by a disulfide bond.

The protein belongs to the rhamnulokinase family. In terms of assembly, monomer. Mg(2+) is required as a cofactor.

The enzyme catalyses L-rhamnulose + ATP = L-rhamnulose 1-phosphate + ADP + H(+). The protein operates within carbohydrate degradation; L-rhamnose degradation; glycerone phosphate from L-rhamnose: step 2/3. In terms of biological role, involved in the catabolism of L-rhamnose (6-deoxy-L-mannose). Catalyzes the transfer of the gamma-phosphate group from ATP to the 1-hydroxyl group of L-rhamnulose to yield L-rhamnulose 1-phosphate. The sequence is that of Rhamnulokinase from Escherichia coli O1:K1 / APEC.